We begin with the raw amino-acid sequence, 851 residues long: DNA mismatch repair protein MutS (851 aa).

602 to 609 (GPNMSGKS) is an ATP binding site.

It belongs to the DNA mismatch repair MutS family.

This protein is involved in the repair of mismatches in DNA. It is possible that it carries out the mismatch recognition step. This protein has a weak ATPase activity. This Streptococcus pyogenes serotype M49 (strain NZ131) protein is DNA mismatch repair protein MutS.